A 282-amino-acid polypeptide reads, in one-letter code: Elongation factor Ts (282 aa).

The interval 79-82 (TDFV) is involved in Mg(2+) ion dislocation from EF-Tu.

This sequence belongs to the EF-Ts family.

It is found in the cytoplasm. Its function is as follows. Associates with the EF-Tu.GDP complex and induces the exchange of GDP to GTP. It remains bound to the aminoacyl-tRNA.EF-Tu.GTP complex up to the GTP hydrolysis stage on the ribosome. The polypeptide is Elongation factor Ts (Shewanella woodyi (strain ATCC 51908 / MS32)).